The primary structure comprises 419 residues: L-rhamnose isomerase (419 aa).

H262, D294, and D296 together coordinate Mn(2+).

The protein belongs to the rhamnose isomerase family. Homotetramer. Requires Mn(2+) as cofactor.

Its subcellular location is the cytoplasm. The enzyme catalyses L-rhamnopyranose = L-rhamnulose. The protein operates within carbohydrate degradation; L-rhamnose degradation; glycerone phosphate from L-rhamnose: step 1/3. Functionally, catalyzes the interconversion of L-rhamnose and L-rhamnulose. This is L-rhamnose isomerase from Escherichia coli O139:H28 (strain E24377A / ETEC).